The primary structure comprises 394 residues: Elongation factor Tu (394 aa).

Residues 10–204 form the tr-type G domain; it reads KPHVNVGTIG…HLDTYIPEPE (195 aa). Residues 19–26 form a G1 region; the sequence is GHVDHGKT. 19-26 is a GTP binding site; it reads GHVDHGKT. Thr-26 contacts Mg(2+). Positions 60-64 are G2; it reads GITIN. Positions 81–84 are G3; sequence DCPG. GTP-binding positions include 81-85 and 136-139; these read DCPGH and NKCD. A G4 region spans residues 136 to 139; the sequence is NKCD. The tract at residues 174–176 is G5; the sequence is SAL.

It belongs to the TRAFAC class translation factor GTPase superfamily. Classic translation factor GTPase family. EF-Tu/EF-1A subfamily. As to quaternary structure, monomer.

The protein localises to the cytoplasm. It carries out the reaction GTP + H2O = GDP + phosphate + H(+). Functionally, GTP hydrolase that promotes the GTP-dependent binding of aminoacyl-tRNA to the A-site of ribosomes during protein biosynthesis. The chain is Elongation factor Tu from Aeromonas salmonicida (strain A449).